The chain runs to 332 residues: UPF0194 membrane protein YbhG (332 aa).

A signal peptide spans 1–16 (MMKKPVVIGLAVVVLA). The stretch at 107–209 (NEEIAQAAAA…LNLQDSTLIA (103 aa)) forms a coiled coil.

Belongs to the UPF0194 family.

It is found in the periplasm. This Escherichia coli (strain K12 / MC4100 / BW2952) protein is UPF0194 membrane protein YbhG.